A 603-amino-acid chain; its full sequence is UvrABC system protein C (603 aa).

The GIY-YIG domain maps to 15–92 (DQPGCYLMKD…IKKHDPRFNI (78 aa)). Residues 197–232 (KTVKNDLMKKMQEAAENMEFEKAGEFRDQINAIETT) enclose the UVR domain.

Belongs to the UvrC family. Interacts with UvrB in an incision complex.

It localises to the cytoplasm. In terms of biological role, the UvrABC repair system catalyzes the recognition and processing of DNA lesions. UvrC both incises the 5' and 3' sides of the lesion. The N-terminal half is responsible for the 3' incision and the C-terminal half is responsible for the 5' incision. The chain is UvrABC system protein C from Listeria monocytogenes serotype 4b (strain CLIP80459).